We begin with the raw amino-acid sequence, 294 residues long: uncharacterized protein (294 aa).

It is found in the mitochondrion. This is an uncharacterized protein from Zea mays (Maize).